The following is a 313-amino-acid chain: Formimidoylglutamase (313 aa).

Residues H130, D155, H157, D159, D241, and D243 each coordinate Mn(2+).

The protein belongs to the arginase family. Requires Mn(2+) as cofactor.

It catalyses the reaction N-formimidoyl-L-glutamate + H2O = formamide + L-glutamate. The protein operates within amino-acid degradation; L-histidine degradation into L-glutamate; L-glutamate from N-formimidoyl-L-glutamate (hydrolase route): step 1/1. In terms of biological role, catalyzes the conversion of N-formimidoyl-L-glutamate to L-glutamate and formamide. The sequence is that of Formimidoylglutamase from Salmonella newport (strain SL254).